A 189-amino-acid polypeptide reads, in one-letter code: Prostaglandin-H2 D-isomerase (189 aa).

The signal sequence occupies residues 1–24 (MAALRMLWMGLVLLGLLGFPQTPA). Glutamine 25 is modified (pyrrolidone carboxylic acid). Residue asparagine 51 is glycosylated (N-linked (GlcNAc...) asparagine). Residue cysteine 65 is the Nucleophile of the active site. Residue asparagine 78 is glycosylated (N-linked (GlcNAc...) asparagine). A disulfide bond links cysteine 89 and cysteine 186.

It belongs to the calycin superfamily. Lipocalin family. As to quaternary structure, monomer. Abundant in the brain and CNS, where it is expressed in tissues of the blood-brain barrier and secreted into the cerebro-spinal fluid. In the male reproductive system, it is expressed in the testis, efferent ducts and epididymis, and is secreted into the seminal fluid. In the eye, it is expressed in the pigmented epithelium of the retina and the nonpigmented epithelium of the ciliary body, and secreted into the aqueous humor. Low levels detected in various tissue fluids such as serum, normal urine, ascitic fluid and tear fluid. Also found in a number of other organs including the ear, heart and lung.

The protein resides in the rough endoplasmic reticulum. The protein localises to the nucleus membrane. Its subcellular location is the golgi apparatus. It is found in the cytoplasm. It localises to the perinuclear region. The protein resides in the secreted. It catalyses the reaction prostaglandin H2 = prostaglandin D2. Functionally, catalyzes the conversion of PGH2 to PGD2, a prostaglandin involved in smooth muscle contraction/relaxation and a potent inhibitor of platelet aggregation. Involved in a variety of CNS functions, such as sedation, NREM sleep and PGE2-induced allodynia, and may have an anti-apoptotic role in oligodendrocytes. Binds small non-substrate lipophilic molecules, including biliverdin, bilirubin, retinal, retinoic acid and thyroid hormone, and may act as a scavenger for harmful hydrophobic molecules and as a secretory retinoid and thyroid hormone transporter. Possibly involved in development and maintenance of the blood-brain, blood-retina, blood-aqueous humor and blood-testis barrier. It is likely to play important roles in both maturation and maintenance of the central nervous system and male reproductive system. Involved in PLA2G3-dependent maturation of mast cells. PLA2G3 is secreted by immature mast cells and acts on nearby fibroblasts upstream to PTDGS to synthesize PGD2, which in turn promotes mast cell maturation and degranulation via PTGDR. This chain is Prostaglandin-H2 D-isomerase (Ptgds), found in Mus musculus (Mouse).